Here is a 156-residue protein sequence, read N- to C-terminus: Small ribosomal subunit protein uS7 (156 aa).

Belongs to the universal ribosomal protein uS7 family. As to quaternary structure, part of the 30S ribosomal subunit. Contacts proteins S9 and S11.

Its function is as follows. One of the primary rRNA binding proteins, it binds directly to 16S rRNA where it nucleates assembly of the head domain of the 30S subunit. Is located at the subunit interface close to the decoding center, probably blocks exit of the E-site tRNA. The protein is Small ribosomal subunit protein uS7 of Synechococcus sp. (strain JA-3-3Ab) (Cyanobacteria bacterium Yellowstone A-Prime).